A 283-amino-acid chain; its full sequence is Bifunctional protein FolD (283 aa).

NADP(+) is bound by residues 164-166 (GRS), S189, and I230.

The protein belongs to the tetrahydrofolate dehydrogenase/cyclohydrolase family. In terms of assembly, homodimer.

The enzyme catalyses (6R)-5,10-methylene-5,6,7,8-tetrahydrofolate + NADP(+) = (6R)-5,10-methenyltetrahydrofolate + NADPH. The catalysed reaction is (6R)-5,10-methenyltetrahydrofolate + H2O = (6R)-10-formyltetrahydrofolate + H(+). Its pathway is one-carbon metabolism; tetrahydrofolate interconversion. Its function is as follows. Catalyzes the oxidation of 5,10-methylenetetrahydrofolate to 5,10-methenyltetrahydrofolate and then the hydrolysis of 5,10-methenyltetrahydrofolate to 10-formyltetrahydrofolate. This chain is Bifunctional protein FolD, found in Lactobacillus delbrueckii subsp. bulgaricus (strain ATCC BAA-365 / Lb-18).